We begin with the raw amino-acid sequence, 359 residues long: UDP-N-acetylglucosamine--N-acetylmuramyl-(pentapeptide) pyrophosphoryl-undecaprenol N-acetylglucosamine transferase (359 aa).

UDP-N-acetyl-alpha-D-glucosamine-binding positions include 15-17, Asn-127, Arg-164, Ser-192, Ile-246, 265-270, and Gln-290; these read SGG and ALTVSE.

It belongs to the glycosyltransferase 28 family. MurG subfamily.

It is found in the cell membrane. The catalysed reaction is di-trans,octa-cis-undecaprenyl diphospho-N-acetyl-alpha-D-muramoyl-L-alanyl-D-glutamyl-meso-2,6-diaminopimeloyl-D-alanyl-D-alanine + UDP-N-acetyl-alpha-D-glucosamine = di-trans,octa-cis-undecaprenyl diphospho-[N-acetyl-alpha-D-glucosaminyl-(1-&gt;4)]-N-acetyl-alpha-D-muramoyl-L-alanyl-D-glutamyl-meso-2,6-diaminopimeloyl-D-alanyl-D-alanine + UDP + H(+). It participates in cell wall biogenesis; peptidoglycan biosynthesis. Its function is as follows. Cell wall formation. Catalyzes the transfer of a GlcNAc subunit on undecaprenyl-pyrophosphoryl-MurNAc-pentapeptide (lipid intermediate I) to form undecaprenyl-pyrophosphoryl-MurNAc-(pentapeptide)GlcNAc (lipid intermediate II). This Wigglesworthia glossinidia brevipalpis protein is UDP-N-acetylglucosamine--N-acetylmuramyl-(pentapeptide) pyrophosphoryl-undecaprenol N-acetylglucosamine transferase.